A 337-amino-acid polypeptide reads, in one-letter code: MREPRFWYGPVSLGSVLLAPIAACYGAVAAARLAREGTRAGCPVICIGNYHVGGAGKTPTTLRLVEILREIGETPVVVSRGYGGTLAGPVRVNETHRAADVGDEPKMMARHVPVIVARDRVEGAELARREGASVVLLDDGFQNPALAKDAAVIVIDAARGLGNRMIFPAGPLRAPLAPQVARTNALIVIGEGHAADDIAQGVVQRGGLVVRAAFVPEESSLARLRGARVLAFAGIGDPGRFFATLAKHGVELASRKEFADHHPFTEAELKALADEAQAGGLTLVTTEKDLARIEGDPALAAYAAQIVPFAVTLRVEDEGALLDFLKARMRRARQARQ.

51 to 58 serves as a coordination point for ATP; that stretch reads HVGGAGKT.

The protein belongs to the LpxK family.

The enzyme catalyses a lipid A disaccharide + ATP = a lipid IVA + ADP + H(+). It functions in the pathway glycolipid biosynthesis; lipid IV(A) biosynthesis; lipid IV(A) from (3R)-3-hydroxytetradecanoyl-[acyl-carrier-protein] and UDP-N-acetyl-alpha-D-glucosamine: step 6/6. Functionally, transfers the gamma-phosphate of ATP to the 4'-position of a tetraacyldisaccharide 1-phosphate intermediate (termed DS-1-P) to form tetraacyldisaccharide 1,4'-bis-phosphate (lipid IVA). The chain is Tetraacyldisaccharide 4'-kinase from Afipia carboxidovorans (strain ATCC 49405 / DSM 1227 / KCTC 32145 / OM5) (Oligotropha carboxidovorans).